Here is a 727-residue protein sequence, read N- to C-terminus: Glycerol-3-phosphate dehydrogenase, mitochondrial (727 aa).

A mitochondrion-targeting transit peptide spans 1–42 (MAFQKAVKGTILVGGGALATVLGLSQFAHYRRKQMNLAYVKA). 71-99 (DILVIGGGATGSGCALDAVTRGLKTALVE) contributes to the FAD binding site. The residue at position 601 (tyrosine 601) is a Phosphotyrosine. EF-hand domains lie at 623 to 658 (SDIDRYKKRFHKFDADKKGFITIVDVQRVLESINVQ) and 659 to 694 (MDENTLHEILNEVDLNKNGQVELNEFLQLMSAIQKG). Ca(2+)-binding residues include aspartate 672, asparagine 674, asparagine 676, glutamine 678, and glutamate 683.

It belongs to the FAD-dependent glycerol-3-phosphate dehydrogenase family. FAD is required as a cofactor.

It is found in the mitochondrion. It catalyses the reaction a quinone + sn-glycerol 3-phosphate = dihydroxyacetone phosphate + a quinol. It participates in polyol metabolism; glycerol degradation via glycerol kinase pathway; glycerone phosphate from sn-glycerol 3-phosphate (aerobic route): step 1/1. With respect to regulation, calcium-binding enhance the activity of the enzyme. In terms of biological role, calcium-responsive mitochondrial glycerol-3-phosphate dehydrogenase which seems to be a key component of the pancreatic beta-cell glucose-sensing device. The chain is Glycerol-3-phosphate dehydrogenase, mitochondrial (GPD2) from Macaca fascicularis (Crab-eating macaque).